Consider the following 159-residue polypeptide: Globin CTT-W (159 aa).

A signal peptide spans 1 to 16 (MKFLVILTLCIAGAIA). The region spanning 17-159 (HCDKAPFIKA…HHAIVYSILE (143 aa)) is the Globin domain. Heme b-binding residues include His-73 and His-108.

Belongs to the globin family.

The chain is Globin CTT-W (CTT-W) from Chironomus thummi piger (Midge).